Here is a 201-residue protein sequence, read N- to C-terminus: Auxin-binding protein 1 (201 aa).

Positions 1 to 38 (MAPDLSELAAAAAARGAYLAGVGVAVLLAASFLPVAES) are cleaved as a signal peptide. Cys-40 and Cys-193 are joined by a disulfide. Residues His-95, His-97, and Glu-101 each contribute to the Zn(2+) site. N-linked (GlcNAc...) asparagine glycosylation is present at Asn-133. His-144 contributes to the Zn(2+) binding site. The short motif at 198-201 (KDEL) is the Prevents secretion from ER element.

Homodimer. Glycosylated. Expressed in roots, coleoptiles, leaves, stems, tassels and ears.

It localises to the endoplasmic reticulum lumen. Its function is as follows. Receptor for the plant hormone auxin. In Zea mays (Maize), this protein is Auxin-binding protein 1.